A 171-amino-acid chain; its full sequence is Putative phosphoesterase BH1439 (171 aa).

The Proton donor role is filled by H34. Short sequence motifs (HXTX) lie at residues 34–37 (HVTL) and 115–118 (HLTI). The active-site Proton acceptor is H115.

The protein belongs to the 2H phosphoesterase superfamily. YjcG family.

The polypeptide is Putative phosphoesterase BH1439 (Halalkalibacterium halodurans (strain ATCC BAA-125 / DSM 18197 / FERM 7344 / JCM 9153 / C-125) (Bacillus halodurans)).